The chain runs to 213 residues: Histone H1.2 (213 aa).

Positions 1–17 are enriched in low complexity; that stretch reads MSETAPAAPAAAPPAEK. Residues 1 to 41 form a disordered region; that stretch reads MSETAPAAPAAAPPAEKAPVKKKAAKKAGGTPRKASGPPVS. Residue S2 is modified to N-acetylserine; partial. S2 bears the Phosphoserine mark. Residue K17 is modified to N6-acetyllysine. N6-(2-hydroxyisobutyryl)lysine occurs at positions 23, 26, and 27. The residue at position 34 (K34) is an N6-(beta-hydroxybutyryl)lysine; alternate. K34 carries the N6-crotonyllysine; alternate modification. K34 carries the N6-methyllysine; alternate modification. An H15 domain is found at 36-109; that stretch reads SGPPVSELIT…GASGSFKLNK (74 aa). K46 bears the N6-(2-hydroxyisobutyryl)lysine mark. K52 is subject to N6-(beta-hydroxybutyryl)lysine; alternate. Position 52 is an N6-(2-hydroxyisobutyryl)lysine; alternate (K52). R54 is subject to Citrulline. Position 63 is an N6-(2-hydroxyisobutyryl)lysine (K63). K64 is subject to N6-(beta-hydroxybutyryl)lysine; alternate. K64 bears the N6-crotonyllysine; alternate mark. Residue K64 is modified to N6-(2-hydroxyisobutyryl)lysine; alternate. N6-(2-hydroxyisobutyryl)lysine is present on residues K75 and K81. 2 positions are modified to N6-(beta-hydroxybutyryl)lysine; alternate: K85 and K90. N6-crotonyllysine; alternate is present on residues K85, K90, and K97. K85, K90, and K97 each carry N6-(2-hydroxyisobutyryl)lysine; alternate. Residues 92–213 are disordered; sequence TLVQTKGTGA…KPKKAAPKKK (122 aa). K97 bears the N6-succinyllysine; alternate mark. Position 104 is a phosphoserine; by PKC (S104). An N6-(beta-hydroxybutyryl)lysine modification is found at K106. N6-(2-hydroxyisobutyryl)lysine occurs at positions 110, 117, 121, 129, and 136. Residues 119-140 show a composition bias toward basic residues; it reads KVKKAGGTKPKKPVGAAKKPKK. T146 is subject to Phosphothreonine. K148 is modified (N6-(2-hydroxyisobutyryl)lysine). Residues 149 to 160 show a composition bias toward basic residues; it reads KSAKKTPKKAKK. K159 and K168 each carry N6-crotonyllysine; alternate. K159 and K168 each carry N6-(2-hydroxyisobutyryl)lysine; alternate. A compositionally biased stretch (basic residues) spans 169–186; sequence KVAKSPKKAKVAKPKKAA. K187 carries the post-translational modification N6-methyllysine; by EHMT1 and EHMT2. Position 188 is an ADP-ribosylserine (S188). The span at 193–213 shows a compositional bias: basic residues; that stretch reads VKPKAAKPKVVKPKKAAPKKK. K213 bears the N6-(2-hydroxyisobutyryl)lysine mark.

It belongs to the histone H1/H5 family. As to quaternary structure, interacts with TSC22D1 isoforms 2 and 5. Post-translationally, H1 histones are progressively phosphorylated during the cell cycle, becoming maximally phosphorylated during late G2 phase and M phase, and being dephosphorylated sharply thereafter. In terms of processing, crotonylation (Kcr) is specifically present in male germ cells and marks testis-specific genes in post-meiotic cells, including X-linked genes that escape sex chromosome inactivation in haploid cells. Crotonylation marks active promoters and enhancers and confers resistance to transcriptional repressors. It is also associated with post-meiotically activated genes on autosomes. Citrullination at Arg-54 (H1R54ci) by PADI4 takes place within the DNA-binding site of H1 and results in its displacement from chromatin and global chromatin decondensation, thereby promoting pluripotency and stem cell maintenance. Post-translationally, ADP-ribosylated on Ser-188 in response to DNA damage.

The protein resides in the nucleus. The protein localises to the chromosome. Functionally, histone H1 protein binds to linker DNA between nucleosomes forming the macromolecular structure known as the chromatin fiber. Histones H1 are necessary for the condensation of nucleosome chains into higher-order structured fibers. Also acts as a regulator of individual gene transcription through chromatin remodeling, nucleosome spacing and DNA methylation. This Homo sapiens (Human) protein is Histone H1.2.